The primary structure comprises 475 residues: Ribulose bisphosphate carboxylase large chain (475 aa).

The propeptide occupies 1–2 (MS). An N-acetylproline modification is found at proline 3. Lysine 14 is subject to N6,N6,N6-trimethyllysine. Substrate is bound by residues asparagine 123 and threonine 173. Lysine 175 functions as the Proton acceptor in the catalytic mechanism. Lysine 177 contacts substrate. Lysine 201, aspartate 203, and glutamate 204 together coordinate Mg(2+). An N6-carboxylysine modification is found at lysine 201. Histidine 294 acts as the Proton acceptor in catalysis. Arginine 295, histidine 327, and serine 379 together coordinate substrate.

Belongs to the RuBisCO large chain family. Type I subfamily. Heterohexadecamer of 8 large chains and 8 small chains; disulfide-linked. The disulfide link is formed within the large subunit homodimers. Mg(2+) serves as cofactor. The disulfide bond which can form in the large chain dimeric partners within the hexadecamer appears to be associated with oxidative stress and protein turnover.

The protein resides in the plastid. It is found in the chloroplast. The enzyme catalyses 2 (2R)-3-phosphoglycerate + 2 H(+) = D-ribulose 1,5-bisphosphate + CO2 + H2O. It catalyses the reaction D-ribulose 1,5-bisphosphate + O2 = 2-phosphoglycolate + (2R)-3-phosphoglycerate + 2 H(+). RuBisCO catalyzes two reactions: the carboxylation of D-ribulose 1,5-bisphosphate, the primary event in carbon dioxide fixation, as well as the oxidative fragmentation of the pentose substrate in the photorespiration process. Both reactions occur simultaneously and in competition at the same active site. The chain is Ribulose bisphosphate carboxylase large chain from Spirogyra maxima (Green alga).